A 189-amino-acid polypeptide reads, in one-letter code: Apolipoprotein D (189 aa).

Residues 1–21 (MAPTLLLLLPALAGLISVAQG) form the signal peptide. Gln22 carries the post-translational modification Pyrrolidone carboxylic acid. Intrachain disulfides connect Cys29-Cys135 and Cys62-Cys186. N-linked (GlcNAc...) asparagine glycosylation is found at Asn66 and Asn99.

The protein belongs to the calycin superfamily. Lipocalin family. As to quaternary structure, homodimer. In terms of tissue distribution, most heavily expressed in adrenal gland, lung, brain, testis and spleen.

Its subcellular location is the secreted. Functionally, APOD occurs in the macromolecular complex with lecithin-transport and binding of bilin. Appears to be able to transport a variety of ligands in a number of different contexts. The sequence is that of Apolipoprotein D (APOD) from Oryctolagus cuniculus (Rabbit).